The sequence spans 32 residues: Cytochrome b6-f complex subunit 7 (32 aa).

A helical transmembrane segment spans residues 5 to 25 (IFTVAGVMWALVLTGLSVGFG).

This sequence belongs to the PetM family. As to quaternary structure, the 4 large subunits of the cytochrome b6-f complex are cytochrome b6, subunit IV (17 kDa polypeptide, PetD), cytochrome f and the Rieske protein, while the 4 small subunits are PetG, PetL, PetM and PetN. The complex functions as a dimer.

It localises to the plastid. The protein localises to the chloroplast thylakoid membrane. Functionally, component of the cytochrome b6-f complex, which mediates electron transfer between photosystem II (PSII) and photosystem I (PSI), cyclic electron flow around PSI, and state transitions. The protein is Cytochrome b6-f complex subunit 7 of Emiliania huxleyi (Coccolithophore).